The primary structure comprises 364 residues: 3-isopropylmalate dehydrogenase (364 aa).

NAD(+) is bound at residue 79-92 (GPKWEHLPAAEQPE). Positions 100, 110, 139, and 228 each coordinate substrate. Asp-228, Asp-252, and Asp-256 together coordinate Mg(2+). 286-298 (GSAPDIAGKDIAN) is an NAD(+) binding site.

This sequence belongs to the isocitrate and isopropylmalate dehydrogenases family. LeuB type 1 subfamily. In terms of assembly, homodimer. The cofactor is Mg(2+). It depends on Mn(2+) as a cofactor.

It localises to the cytoplasm. It carries out the reaction (2R,3S)-3-isopropylmalate + NAD(+) = 4-methyl-2-oxopentanoate + CO2 + NADH. Its pathway is amino-acid biosynthesis; L-leucine biosynthesis; L-leucine from 3-methyl-2-oxobutanoate: step 3/4. Its function is as follows. Catalyzes the oxidation of 3-carboxy-2-hydroxy-4-methylpentanoate (3-isopropylmalate) to 3-carboxy-4-methyl-2-oxopentanoate. The product decarboxylates to 4-methyl-2 oxopentanoate. This is 3-isopropylmalate dehydrogenase from Sodalis glossinidius (strain morsitans).